Reading from the N-terminus, the 337-residue chain is Glycerol-3-phosphate dehydrogenase [NAD(P)+] (337 aa).

Residues serine 11, tryptophan 12, arginine 32, and lysine 109 each coordinate NADPH. Sn-glycerol 3-phosphate-binding residues include lysine 109, glycine 140, and serine 142. Position 144 (alanine 144) interacts with NADPH. 5 residues coordinate sn-glycerol 3-phosphate: lysine 195, aspartate 248, serine 258, arginine 259, and asparagine 260. Lysine 195 serves as the catalytic Proton acceptor. Arginine 259 lines the NADPH pocket. Valine 283 and glutamate 285 together coordinate NADPH.

The protein belongs to the NAD-dependent glycerol-3-phosphate dehydrogenase family.

It is found in the cytoplasm. It catalyses the reaction sn-glycerol 3-phosphate + NAD(+) = dihydroxyacetone phosphate + NADH + H(+). The catalysed reaction is sn-glycerol 3-phosphate + NADP(+) = dihydroxyacetone phosphate + NADPH + H(+). Its pathway is membrane lipid metabolism; glycerophospholipid metabolism. Its function is as follows. Catalyzes the reduction of the glycolytic intermediate dihydroxyacetone phosphate (DHAP) to sn-glycerol 3-phosphate (G3P), the key precursor for phospholipid synthesis. The sequence is that of Glycerol-3-phosphate dehydrogenase [NAD(P)+] from Limosilactobacillus fermentum (strain NBRC 3956 / LMG 18251) (Lactobacillus fermentum).